The sequence spans 1715 residues: Neurexin-2 (1715 aa).

The signal sequence occupies residues 1 to 29; that stretch reads MALGSRWRPPPQLPPLLLLLALVAGVRGL. The 177-residue stretch at 30–206 folds into the Laminin G-like 1 domain; sequence EFGGGPGQWA…LRGAAADPLC (177 aa). Topologically, residues 30–1639 are extracellular; sequence EFGGGPGQWA…EVIRESSSTT (1610 aa). N-linked (GlcNAc...) asparagine glycosylation occurs at Asn-60. The EGF-like 1 domain occupies 202–242; sequence ADPLCAPARNPCANGGLCTVLAPGEVGCDCSHTGFGGKFCS. Intrachain disulfides connect Cys-206-Cys-219, Cys-213-Cys-229, and Cys-231-Cys-241. 2 consecutive Laminin G-like domains span residues 289-486 and 493-686; these read VATF…SFRC and DPVT…APFC. Asp-335 serves as a coordination point for Ca(2+). N-linked (GlcNAc...) asparagine glycosylation occurs at Asn-338. Ca(2+) contacts are provided by Leu-352 and Met-420. Disulfide bonds link Cys-450-Cys-486, Cys-657-Cys-686, Cys-694-Cys-705, Cys-699-Cys-714, and Cys-716-Cys-726. Positions 690–727 constitute an EGF-like 2 domain; sequence TLKQCASAPCRNGGICREGWNRFVCDCIGTGFLGRVCE. Laminin G-like domains lie at 732–907 and 921–1096; these read VLSY…ITYC and DPVT…ERGC. Residues Asp-779 and Leu-796 each coordinate Ca(2+). Asn-844 is a glycosylation site (N-linked (GlcNAc...) asparagine). Residue Arg-857 coordinates Ca(2+). 4 disulfides stabilise this stretch: Cys-1068–Cys-1096, Cys-1103–Cys-1114, Cys-1108–Cys-1123, and Cys-1125–Cys-1135. The EGF-like 3 domain maps to 1099-1136; that stretch reads PSTTCTEESCANQGVCLQQWDGFTCDCTMTSYGGPVCN. Residues 1140 to 1348 form the Laminin G-like 6 domain; that stretch reads TTYIFGKGGA…HLRLVGEGPS (209 aa). Ca(2+)-binding residues include Asp-1192 and Val-1209. N-linked (GlcNAc...) asparagine glycosylation occurs at Asn-1239. Residues Ile-1291 and Asn-1293 each coordinate Ca(2+). A glycan (O-linked (Xyl...) (heparan sulfate) serine) is linked at Ser-1403. 3 disordered regions span residues 1461-1511, 1529-1549, and 1583-1626; these read ATQD…LPPT, LLSP…ATGA, and LGPG…RGPP. The helical transmembrane segment at 1640–1660 threads the bilayer; the sequence is GMVVGIVAAAALCILILLYAM. Topologically, residues 1661–1715 are cytoplasmic; sequence YKYRNRDEGSYQVDQSRNYISNSAQSNGAVVKEKAPAAPKTPSKAKKNKDKEYYV. Residues 1682–1715 form a disordered region; sequence NSAQSNGAVVKEKAPAAPKTPSKAKKNKDKEYYV.

This sequence belongs to the neurexin family. In terms of assembly, the laminin G-like domain 1 binds to NXPH1. Interacts with PATJ. Interacts with CBLN1, CBLN2 and, less avidly, with CBLN4. Specific isoforms bind neuroligins NLGN1, NLGN2 and NLGN3. Isoform 5c/alpha-2C binds to alpha-dystroglycan. Interacts (via Laminin G-like 1 domain) with IGSF21 (Ig-like 1 domain) in a trans-interaction manner. Interacts with CLSTN3. In terms of processing, O-glycosylated; contains heparan sulfate. Heparan sulfate attachment is required for synapse development by mediating interactions with neuroligins. In terms of tissue distribution, brain (neuronal synapse).

The protein localises to the presynaptic cell membrane. Its function is as follows. Neuronal cell surface protein that may be involved in cell recognition and cell adhesion. May mediate intracellular signaling. The sequence is that of Neurexin-2 (Nrxn2) from Rattus norvegicus (Rat).